Here is a 502-residue protein sequence, read N- to C-terminus: Potassium channel KAT3 (502 aa).

Residues 1–67 are Cytoplasmic-facing; the sequence is MPRSSRMNLW…PYDPRYKVWE (67 aa). Residues 68–88 form a helical membrane-spanning segment; that stretch reads TFLIILVVYSAWICPLEFAFL. Topologically, residues 89 to 95 are extracellular; that stretch reads RYLPSAP. A helical transmembrane segment spans residues 96 to 116; it reads FVVDDVVNGFFAVDIMLTFFV. Residues 117–138 are Cytoplasmic-facing; that stretch reads PFVDKKSYLLVNDPKKIAVRYL. A helical transmembrane segment spans residues 139 to 159; it reads SSWFVFDVCSTVPFHSISLLF. Residues 160–169 are Extracellular-facing; it reads NEHGHDLGFK. The helical; Voltage-sensor transmembrane segment at 170 to 190 threads the bilayer; that stretch reads FLNVLRLWRLRRVSSMFARLE. The Cytoplasmic portion of the chain corresponds to 191–204; it reads KDIRFNYAVIRCTK. The chain crosses the membrane as a helical span at residues 205 to 225; it reads LISVTLFAIHCAGCINYLIAD. Topologically, residues 226-252 are extracellular; sequence RYPDPRRTWIGAVMPNFREDGLWIRYV. The pore-forming intramembrane region spans 253 to 272; it reads TAMYWSITTLTTTGYGDLHA. Over 273–276 the chain is Extracellular; the sequence is ENAR. The helical transmembrane segment at 277-297 threads the bilayer; the sequence is EMLFGICYMLFNLWLTAYLIG. Topologically, residues 298 to 502 are cytoplasmic; it reads NMTNLVVHST…IRSNLQQVNV (205 aa). 381 to 500 serves as a coordination point for a nucleoside 3',5'-cyclic phosphate; sequence LFKGVSSRFI…DIIRSNLQQV (120 aa).

It belongs to the potassium channel family. Plant (TC 1.A.1.4) subfamily.

It is found in the membrane. Functionally, probable inward-rectifying potassium channel. Assuming opened or closed conformations in response to the voltage difference across the membrane, the channel is activated by hyperpolarization. The sequence is that of Potassium channel KAT3 from Oryza sativa subsp. japonica (Rice).